Reading from the N-terminus, the 325-residue chain is Casein kinase I isoform alpha (325 aa).

Ala-2 carries the post-translational modification N-acetylalanine. Ser-4 carries the post-translational modification Phosphoserine. Lys-8 bears the N6-acetyllysine mark. Residues 17–285 enclose the Protein kinase domain; sequence YKLVRKIGSG…YLRQLFRILF (269 aa). ATP is bound by residues 23-31 and Lys-46; that span reads IGSGSFGDI. Catalysis depends on Asp-136, which acts as the Proton acceptor. Residue Ile-156 is modified to Phosphoserine.

This sequence belongs to the protein kinase superfamily. CK1 Ser/Thr protein kinase family. Casein kinase I subfamily. As to quaternary structure, interacts with the Axin complex. Interacts with TUT1, leading to TUT1 phosphorylation. Interacts with FAM83A, FAM83B, FAM83C, FAM83D, FAM83E, FAM83F, FAM83G and FAM83H (via DUF1669). Interaction with FAM83H recruits CSNK1A1 to keratin filaments. Phosphorylated by MTOR in response to mitogenic stimulation, leading to its activation.

It is found in the cytoplasm. The protein localises to the cytoskeleton. Its subcellular location is the microtubule organizing center. The protein resides in the centrosome. It localises to the chromosome. It is found in the centromere. The protein localises to the kinetochore. Its subcellular location is the nucleus speckle. The protein resides in the cilium basal body. It localises to the spindle. It catalyses the reaction L-seryl-[protein] + ATP = O-phospho-L-seryl-[protein] + ADP + H(+). The catalysed reaction is L-threonyl-[protein] + ATP = O-phospho-L-threonyl-[protein] + ADP + H(+). Functionally, casein kinases are operationally defined by their preferential utilization of acidic proteins such as caseins as substrates. Can phosphorylate a large number of proteins. Participates in Wnt signaling. Phosphorylates CTNNB1 at 'Ser-45'. May phosphorylate PER1 and PER2. May play a role in segregating chromosomes during mitosis. May play a role in keratin cytoskeleton disassembly and thereby, it may regulate epithelial cell migration. Acts as a positive regulator of mTORC1 and mTORC2 signaling in response to nutrients by mediating phosphorylation of DEPTOR inhibitor. Acts as an inhibitor of NLRP3 inflammasome assembly by mediating phosphorylation of NLRP3. In Rattus norvegicus (Rat), this protein is Casein kinase I isoform alpha (Csnk1a1).